We begin with the raw amino-acid sequence, 218 residues long: Large ribosomal subunit protein uL3 (218 aa).

2 disordered regions span residues 128–167 and 199–218; these read FSRG…RMGG and SLLN…QGGK.

This sequence belongs to the universal ribosomal protein uL3 family. Part of the 50S ribosomal subunit. Forms a cluster with proteins L14 and L19.

In terms of biological role, one of the primary rRNA binding proteins, it binds directly near the 3'-end of the 23S rRNA, where it nucleates assembly of the 50S subunit. This is Large ribosomal subunit protein uL3 from Prochlorococcus marinus (strain NATL2A).